The sequence spans 343 residues: WAT1-related protein At1g43650 (343 aa).

10 helical membrane-spanning segments follow: residues 9-29 (MAMVFVQIVYAGMPLLSKVAI), 36-56 (FVFVFYRQAFAALALSPFAFF), 65-85 (LSFILLLKIFFISLCGLTLSL), 98-118 (TFAAATTNAIPSITFVLALLF), 130-150 (GVAKVTGSMVGMLGALVFAFV), 175-195 (SVKGSITMLAANTCWCLWIIM), 209-229 (LVALQCLFSCIQSAVWAVAVN), 239-259 (FGLPLLSMAYCGIMVTGLTYW), 272-292 (FTALYTPLALILTCIVSSFLF), and 296-316 (FYLGSVGGAVLLVCGLYLGLW). 2 EamA domains span residues 16-139 (IVYA…GSMV) and 188-313 (CWCL…GLYL).

Belongs to the drug/metabolite transporter (DMT) superfamily. Plant drug/metabolite exporter (P-DME) (TC 2.A.7.4) family.

It localises to the membrane. The chain is WAT1-related protein At1g43650 from Arabidopsis thaliana (Mouse-ear cress).